The following is a 418-amino-acid chain: Gamma-glutamyl phosphate reductase (418 aa).

Belongs to the gamma-glutamyl phosphate reductase family.

It localises to the cytoplasm. It carries out the reaction L-glutamate 5-semialdehyde + phosphate + NADP(+) = L-glutamyl 5-phosphate + NADPH + H(+). It participates in amino-acid biosynthesis; L-proline biosynthesis; L-glutamate 5-semialdehyde from L-glutamate: step 2/2. Its function is as follows. Catalyzes the NADPH-dependent reduction of L-glutamate 5-phosphate into L-glutamate 5-semialdehyde and phosphate. The product spontaneously undergoes cyclization to form 1-pyrroline-5-carboxylate. This Desulforapulum autotrophicum (strain ATCC 43914 / DSM 3382 / VKM B-1955 / HRM2) (Desulfobacterium autotrophicum) protein is Gamma-glutamyl phosphate reductase.